The primary structure comprises 263 residues: Protein phosphatase type 2A regulatory subunit RTS3 (263 aa).

2 disordered regions span residues 1 to 62 (MIAT…AQRR) and 149 to 176 (LPLT…ISNG). A compositionally biased stretch (low complexity) spans 46–61 (LSTSSSPSSSPMSAQR). Phosphoserine is present on residues Ser-172, Ser-192, Ser-214, and Ser-238.

The protein resides in the cytoplasm. Its subcellular location is the nucleus. In terms of biological role, may be a component of a protein phosphatase type 2A (PP2A) complex. Negatively regulates SIT4 phosphatase, a modulators of caffeine sensitivity. In Saccharomyces cerevisiae (strain ATCC 204508 / S288c) (Baker's yeast), this protein is Protein phosphatase type 2A regulatory subunit RTS3 (RTS3).